The following is a 278-amino-acid chain: Glycyl-dTMP PLP-dependent decarboxylase (278 aa).

The protein belongs to the pyridoxal-phosphate-dependent aminodecarboxylase family.

The enzyme catalyses 5-C(alpha)-glycyl-dTMP in DNA + H(+) = 5-aminoethyl-dUMP in DNA + CO2. Its function is as follows. Converts 5-Calpha-glycinylthymidine (Calpha-GlyT) into 5-aminoethyl-2'-deoxyuridine (5-NedU) as a step in the pathway leading to thymidine hypermodifications in the viral genome. As a final result of the pathway of hypermodification, 5-aminoethyl-2'-deoxyuridine (5-NedU) substitutes for about 30% of thymidines in the viral DNA. These modifications probably prevent degradation of viral genome by the host restriction-modification antiviral defense system. The protein is Glycyl-dTMP PLP-dependent decarboxylase of Pseudomonas aeruginosa.